The following is an 835-amino-acid chain: Bifunctional uridylyltransferase/uridylyl-removing enzyme (835 aa).

Residues 1-316 form a uridylyltransferase region; it reads MTDEAEDSGP…GGKPVAERSP (316 aa). The tract at residues 317-650 is uridylyl-removing; that stretch reads LAEGVVEQDG…SADGPEPLGV (334 aa). Residues 431–554 form the HD domain; the sequence is VDRHLIETAV…DALATGPAAW (124 aa). The segment at 610-645 is disordered; sequence QTEPPADSAPAPSSPSSPSFPSPLSSPSSPSSADGP. The segment covering 621 to 630 has biased composition (pro residues); it reads PSSPSSPSFP. Over residues 631 to 642 the composition is skewed to low complexity; it reads SPLSSPSSPSSA. ACT domains are found at residues 651–736 and 765–835; these read ELLI…LAER and VIEV…SLRT.

This sequence belongs to the GlnD family. It depends on Mg(2+) as a cofactor.

It carries out the reaction [protein-PII]-L-tyrosine + UTP = [protein-PII]-uridylyl-L-tyrosine + diphosphate. The catalysed reaction is [protein-PII]-uridylyl-L-tyrosine + H2O = [protein-PII]-L-tyrosine + UMP + H(+). Its activity is regulated as follows. Uridylyltransferase (UTase) activity is inhibited by glutamine, while glutamine activates uridylyl-removing (UR) activity. In terms of biological role, modifies, by uridylylation and deuridylylation, the PII regulatory proteins (GlnB and homologs), in response to the nitrogen status of the cell that GlnD senses through the glutamine level. Under low glutamine levels, catalyzes the conversion of the PII proteins and UTP to PII-UMP and PPi, while under higher glutamine levels, GlnD hydrolyzes PII-UMP to PII and UMP (deuridylylation). Thus, controls uridylylation state and activity of the PII proteins, and plays an important role in the regulation of nitrogen assimilation and metabolism. This is Bifunctional uridylyltransferase/uridylyl-removing enzyme from Streptomyces coelicolor (strain ATCC BAA-471 / A3(2) / M145).